Consider the following 1039-residue polypeptide: Error-prone DNA polymerase (1039 aa).

This sequence belongs to the DNA polymerase type-C family. DnaE2 subfamily.

The protein localises to the cytoplasm. The catalysed reaction is DNA(n) + a 2'-deoxyribonucleoside 5'-triphosphate = DNA(n+1) + diphosphate. Functionally, DNA polymerase involved in damage-induced mutagenesis and translesion synthesis (TLS). It is not the major replicative DNA polymerase. The sequence is that of Error-prone DNA polymerase from Idiomarina loihiensis (strain ATCC BAA-735 / DSM 15497 / L2-TR).